The chain runs to 63 residues: Large ribosomal subunit protein bL28 (63 aa).

The protein belongs to the bacterial ribosomal protein bL28 family.

The protein is Large ribosomal subunit protein bL28 of Clostridium kluyveri (strain NBRC 12016).